The following is a 97-amino-acid chain: Defensin-like protein 301 (97 aa).

An N-terminal signal peptide occupies residues 1–24; that stretch reads MEKVTSIFFVLLLISSCLILRSQG. Cystine bridges form between cysteine 28–cysteine 47, cysteine 34–cysteine 53, cysteine 39–cysteine 55, cysteine 65–cysteine 84, cysteine 71–cysteine 92, and cysteine 76–cysteine 94.

This sequence belongs to the DEFL family.

The protein resides in the secreted. The protein is Defensin-like protein 301 of Arabidopsis thaliana (Mouse-ear cress).